We begin with the raw amino-acid sequence, 228 residues long: Lipoprotein-releasing system ATP-binding protein LolD (228 aa).

The region spanning 6–225 is the ABC transporter domain; sequence LEAKDVYKHF…ILHMQDGLWV (220 aa). ATP is bound at residue 42–49; it reads GASGSGKS.

Belongs to the ABC transporter superfamily. Lipoprotein translocase (TC 3.A.1.125) family. As to quaternary structure, the complex is composed of two ATP-binding proteins (LolD) and two transmembrane proteins (LolC and LolE).

It is found in the cell inner membrane. Functionally, part of the ABC transporter complex LolCDE involved in the translocation of mature outer membrane-directed lipoproteins, from the inner membrane to the periplasmic chaperone, LolA. Responsible for the formation of the LolA-lipoprotein complex in an ATP-dependent manner. This Acinetobacter baylyi (strain ATCC 33305 / BD413 / ADP1) protein is Lipoprotein-releasing system ATP-binding protein LolD.